Consider the following 357-residue polypeptide: 3-dehydroquinate synthase (357 aa).

NAD(+)-binding positions include 104-108 (GVVGD), 128-129 (TT), Lys-141, and 168-171 (FLET). Residues Glu-183, His-243, and His-260 each contribute to the Zn(2+) site.

Belongs to the sugar phosphate cyclases superfamily. Dehydroquinate synthase family. NAD(+) is required as a cofactor. It depends on Co(2+) as a cofactor. The cofactor is Zn(2+).

The protein resides in the cytoplasm. It catalyses the reaction 7-phospho-2-dehydro-3-deoxy-D-arabino-heptonate = 3-dehydroquinate + phosphate. It functions in the pathway metabolic intermediate biosynthesis; chorismate biosynthesis; chorismate from D-erythrose 4-phosphate and phosphoenolpyruvate: step 2/7. Catalyzes the conversion of 3-deoxy-D-arabino-heptulosonate 7-phosphate (DAHP) to dehydroquinate (DHQ). This is 3-dehydroquinate synthase from Streptococcus pyogenes serotype M18 (strain MGAS8232).